The sequence spans 339 residues: Ribosomal RNA small subunit methyltransferase H (339 aa).

S-adenosyl-L-methionine-binding positions include 52-54 (GGH), Asp71, Phe98, Asp130, and Gln137.

This sequence belongs to the methyltransferase superfamily. RsmH family.

The protein localises to the cytoplasm. The enzyme catalyses cytidine(1402) in 16S rRNA + S-adenosyl-L-methionine = N(4)-methylcytidine(1402) in 16S rRNA + S-adenosyl-L-homocysteine + H(+). Functionally, specifically methylates the N4 position of cytidine in position 1402 (C1402) of 16S rRNA. This Corynebacterium diphtheriae (strain ATCC 700971 / NCTC 13129 / Biotype gravis) protein is Ribosomal RNA small subunit methyltransferase H.